Reading from the N-terminus, the 422-residue chain is Lipoyl synthase, mitochondrial (422 aa).

Residues 1–34 (MAASSTRLRCLYASSAPAWKKSPSQSIISLSRHY) constitute a mitochondrion transit peptide. A compositionally biased stretch (polar residues) spans 37 to 48 (TSSTTPSLNPDE). A disordered region spans residues 37–70 (TSSTTPSLNPDESSSSSSSTIPKRRKTTTFRDKL). The [4Fe-4S] cluster site is built by cysteine 146, cysteine 151, cysteine 157, cysteine 177, cysteine 181, cysteine 184, and serine 383. Residues 160 to 372 (GSDKSAATAT…RQRALEMGFL (213 aa)) form the Radical SAM core domain.

The protein belongs to the radical SAM superfamily. Lipoyl synthase family. [4Fe-4S] cluster is required as a cofactor.

It localises to the mitochondrion. It catalyses the reaction [[Fe-S] cluster scaffold protein carrying a second [4Fe-4S](2+) cluster] + N(6)-octanoyl-L-lysyl-[protein] + 2 oxidized [2Fe-2S]-[ferredoxin] + 2 S-adenosyl-L-methionine + 4 H(+) = [[Fe-S] cluster scaffold protein] + N(6)-[(R)-dihydrolipoyl]-L-lysyl-[protein] + 4 Fe(3+) + 2 hydrogen sulfide + 2 5'-deoxyadenosine + 2 L-methionine + 2 reduced [2Fe-2S]-[ferredoxin]. The protein operates within protein modification; protein lipoylation via endogenous pathway; protein N(6)-(lipoyl)lysine from octanoyl-[acyl-carrier-protein]: step 2/2. In terms of biological role, catalyzes the radical-mediated insertion of two sulfur atoms into the C-6 and C-8 positions of the octanoyl moiety bound to the lipoyl domains of lipoate-dependent enzymes, thereby converting the octanoylated domains into lipoylated derivatives. The chain is Lipoyl synthase, mitochondrial from Talaromyces stipitatus (strain ATCC 10500 / CBS 375.48 / QM 6759 / NRRL 1006) (Penicillium stipitatum).